The chain runs to 441 residues: UPF0761 membrane protein RSc1559 (441 aa).

Helical transmembrane passes span 44 to 64 (VLSLVPILTVAFALFTAFPMF), 101 to 121 (GLTAAGLVGLVVTSVMTMLTV), 141 to 161 (VLVFWALVSFGPVLIGASLSV), 182 to 202 (VVVGLVPILLSAIAFAMLYVF), 207 to 227 (LVAWRDAFLAGLVAAVAFEIA), and 248 to 268 (FAALPIFLLWIYVSWLVTLLG).

This sequence belongs to the UPF0761 family.

The protein resides in the cell inner membrane. The polypeptide is UPF0761 membrane protein RSc1559 (Ralstonia nicotianae (strain ATCC BAA-1114 / GMI1000) (Ralstonia solanacearum)).